The following is a 371-amino-acid chain: Monomethylxanthine methyltransferase 2 (371 aa).

8 residues coordinate S-adenosyl-L-homocysteine: Tyr-18, Cys-61, Asn-66, Asp-100, Leu-101, Ser-139, Phe-140, and Cys-156. 3 residues coordinate theobromine: Tyr-157, His-160, and Trp-161. Mg(2+) is bound by residues Asn-178, Asp-260, Phe-262, and Asn-263. Tyr-355 contributes to the theobromine binding site.

This sequence belongs to the methyltransferase superfamily. Type-7 methyltransferase family. Requires Mg(2+) as cofactor.

The enzyme catalyses 7-methylxanthine + S-adenosyl-L-methionine = theobromine + S-adenosyl-L-homocysteine + H(+). It functions in the pathway alkaloid biosynthesis. Involved in the biosynthesis of caffeine. Catalyzes the conversion of 7-methylxanthine (7mX) to theobromine and with a lower activity of paraxanthine to caffeine. This Coffea canephora (Robusta coffee) protein is Monomethylxanthine methyltransferase 2.